The primary structure comprises 64 residues: Large ribosomal subunit protein bL33c (64 aa).

Belongs to the bacterial ribosomal protein bL33 family.

Its subcellular location is the plastid. The protein resides in the chloroplast. The polypeptide is Large ribosomal subunit protein bL33c (Thalassiosira pseudonana (Marine diatom)).